Consider the following 331-residue polypeptide: MTMVASWTRNHILDLTDWRGEELDIVLQTATTFQQVLSGQTKKVPALQGQVVTNLFFEPSTRTRSSFELAAKRLSADVMNFSPGTSSLTKGETILDTAKTYLAMGSDIFVIRHQQAGVPHFIASQMDRLQTGVKVLNAGDGQHEHPSQGLLDLFTICSQFAPDNPAIQCLQGKKIAVVGDILHSRVARSNLWSLTTAGADVHLAGPPTLLPKEFQQLTLAPGSGKLHCHWQLQPALEGADIVMTLRLQKERMTAHLLPSLREYHHYFGITHDRLKVCQPGVKVLHPGPVNRGVEISSELMDDPDISLIQDQVTSGVAIRMALLYLLGTVQE.

Carbamoyl phosphate contacts are provided by Arg-62 and Thr-63. L-aspartate is bound at residue Lys-90. The carbamoyl phosphate site is built by Arg-112, His-145, and Gln-148. Arg-185 and Arg-246 together coordinate L-aspartate. Carbamoyl phosphate contacts are provided by Gly-287 and Pro-288.

This sequence belongs to the aspartate/ornithine carbamoyltransferase superfamily. ATCase family. As to quaternary structure, heterododecamer (2C3:3R2) of six catalytic PyrB chains organized as two trimers (C3), and six regulatory PyrI chains organized as three dimers (R2).

The enzyme catalyses carbamoyl phosphate + L-aspartate = N-carbamoyl-L-aspartate + phosphate + H(+). It functions in the pathway pyrimidine metabolism; UMP biosynthesis via de novo pathway; (S)-dihydroorotate from bicarbonate: step 2/3. Functionally, catalyzes the condensation of carbamoyl phosphate and aspartate to form carbamoyl aspartate and inorganic phosphate, the committed step in the de novo pyrimidine nucleotide biosynthesis pathway. The polypeptide is Aspartate carbamoyltransferase catalytic subunit (Synechocystis sp. (strain ATCC 27184 / PCC 6803 / Kazusa)).